The primary structure comprises 304 residues: Acetyl-coenzyme A carboxylase carboxyl transferase subunit beta (304 aa).

The CoA carboxyltransferase N-terminal domain occupies 23-292 (VWTKCDSCGQ…PNPEAPREGV (270 aa)). Cys27, Cys30, Cys46, and Cys49 together coordinate Zn(2+). The segment at 27–49 (CDSCGQVLYRAELERNLEVCPKC) adopts a C4-type zinc-finger fold. The interval 284 to 304 (NPEAPREGVVVPPVPDQEPEA) is disordered. Residues 295 to 304 (PPVPDQEPEA) are compositionally biased toward pro residues.

This sequence belongs to the AccD/PCCB family. In terms of assembly, acetyl-CoA carboxylase is a heterohexamer composed of biotin carboxyl carrier protein (AccB), biotin carboxylase (AccC) and two subunits each of ACCase subunit alpha (AccA) and ACCase subunit beta (AccD). Zn(2+) serves as cofactor.

The protein resides in the cytoplasm. It catalyses the reaction N(6)-carboxybiotinyl-L-lysyl-[protein] + acetyl-CoA = N(6)-biotinyl-L-lysyl-[protein] + malonyl-CoA. It participates in lipid metabolism; malonyl-CoA biosynthesis; malonyl-CoA from acetyl-CoA: step 1/1. Functionally, component of the acetyl coenzyme A carboxylase (ACC) complex. Biotin carboxylase (BC) catalyzes the carboxylation of biotin on its carrier protein (BCCP) and then the CO(2) group is transferred by the transcarboxylase to acetyl-CoA to form malonyl-CoA. The sequence is that of Acetyl-coenzyme A carboxylase carboxyl transferase subunit beta from Shigella flexneri.